We begin with the raw amino-acid sequence, 481 residues long: Aspartyl/glutamyl-tRNA(Asn/Gln) amidotransferase subunit B (481 aa).

Belongs to the GatB/GatE family. GatB subfamily. As to quaternary structure, heterotrimer of A, B and C subunits.

The catalysed reaction is L-glutamyl-tRNA(Gln) + L-glutamine + ATP + H2O = L-glutaminyl-tRNA(Gln) + L-glutamate + ADP + phosphate + H(+). It catalyses the reaction L-aspartyl-tRNA(Asn) + L-glutamine + ATP + H2O = L-asparaginyl-tRNA(Asn) + L-glutamate + ADP + phosphate + 2 H(+). Allows the formation of correctly charged Asn-tRNA(Asn) or Gln-tRNA(Gln) through the transamidation of misacylated Asp-tRNA(Asn) or Glu-tRNA(Gln) in organisms which lack either or both of asparaginyl-tRNA or glutaminyl-tRNA synthetases. The reaction takes place in the presence of glutamine and ATP through an activated phospho-Asp-tRNA(Asn) or phospho-Glu-tRNA(Gln). In Pseudomonas putida (strain ATCC 47054 / DSM 6125 / CFBP 8728 / NCIMB 11950 / KT2440), this protein is Aspartyl/glutamyl-tRNA(Asn/Gln) amidotransferase subunit B.